The sequence spans 697 residues: U-box domain-containing protein 18 (697 aa).

The U-box N-terminal domain (UND) required for EXO70B1 binding and crucial for the negative regulation of ABA-dependent stomatal movement stretch occupies residues 23–210; sequence SISIVTLLDS…INRILDHVGI (188 aa). The 75-residue stretch at 287–361 folds into the U-box domain; the sequence is LKVEDLLCPI…RKHCKTNGIV (75 aa). ARM repeat units follow at residues 420–459, 461–500, 502–544, 546–587, 589–631, and 657–696; these read SFNR…NLSK, VTGK…YLSS, EDYS…GLLM, SDNH…KLAE, PDGT…NLCL, and NGEY…FVHA.

As to quaternary structure, interacts with EXO70B1 via its U-box N-terminal domain (UND).

It localises to the endomembrane system. It catalyses the reaction S-ubiquitinyl-[E2 ubiquitin-conjugating enzyme]-L-cysteine + [acceptor protein]-L-lysine = [E2 ubiquitin-conjugating enzyme]-L-cysteine + N(6)-ubiquitinyl-[acceptor protein]-L-lysine.. It participates in protein modification; protein ubiquitination. In terms of biological role, functions as an E3 ubiquitin ligase. Mediates EXO70B1 ubiquitination. Involved in the regulation of abscisic acid (ABA)-mediated stomatal movements. The polypeptide is U-box domain-containing protein 18 (Arabidopsis thaliana (Mouse-ear cress)).